The chain runs to 360 residues: Phospho-N-acetylmuramoyl-pentapeptide-transferase (360 aa).

The next 10 helical transmembrane spans lie at 27-47, 70-90, 98-118, 134-154, 168-188, 199-219, 239-259, 263-283, 288-308, and 337-357; these read GALF…ISLL, GTPT…ILLW, VWVT…DDYL, LLLE…YSPA, ALLN…VGAG, GLAI…AYLV, LAVV…FNAP, IFMG…IAVA, IVLA…IIQV, and QVVI…LATL.

This sequence belongs to the glycosyltransferase 4 family. MraY subfamily. It depends on Mg(2+) as a cofactor.

The protein localises to the cell inner membrane. The catalysed reaction is UDP-N-acetyl-alpha-D-muramoyl-L-alanyl-gamma-D-glutamyl-meso-2,6-diaminopimeloyl-D-alanyl-D-alanine + di-trans,octa-cis-undecaprenyl phosphate = di-trans,octa-cis-undecaprenyl diphospho-N-acetyl-alpha-D-muramoyl-L-alanyl-D-glutamyl-meso-2,6-diaminopimeloyl-D-alanyl-D-alanine + UMP. It functions in the pathway cell wall biogenesis; peptidoglycan biosynthesis. In terms of biological role, catalyzes the initial step of the lipid cycle reactions in the biosynthesis of the cell wall peptidoglycan: transfers peptidoglycan precursor phospho-MurNAc-pentapeptide from UDP-MurNAc-pentapeptide onto the lipid carrier undecaprenyl phosphate, yielding undecaprenyl-pyrophosphoryl-MurNAc-pentapeptide, known as lipid I. In Methylorubrum populi (strain ATCC BAA-705 / NCIMB 13946 / BJ001) (Methylobacterium populi), this protein is Phospho-N-acetylmuramoyl-pentapeptide-transferase.